The following is a 150-amino-acid chain: MNEALDDIDRILVRELAADGRATLSELATRAGLSVSAVQSRVRRLESRGVVQGYSARINPEAVGHLLSAFVAITPLDPSQPDDAPARLEHIEEVESCYSVAGEESYVLLVRVASARALEDLLQRIRTTANVRTRSTIILNTFYSDRQHIP.

One can recognise an HTH asnC-type domain in the interval 5–66; it reads LDDIDRILVR…RINPEAVGHL (62 aa). The segment at residues 24–43 is a DNA-binding region (H-T-H motif); that stretch reads LSELATRAGLSVSAVQSRVR. Residues V100, G102, and E104 each coordinate L-phenylalanine.

As to quaternary structure, homohexadecamer in the absence of any added ligand. Homooctamer. Tetramer of dimers. In the presence of phenylalanine, the hexadecamer dissociates into an octamer, which further dissociates partially into lower-order oligomers.

With respect to regulation, the DNA-binding activity of LrpA is modulated by interaction of LrpA with various effector molecules, including amino acids and vitamins. The DNA binding affinity is decreased by several amino acids, including phenylalanine, tyrosine, tryptophan, histidine, leucine and aspartate. Preferentially binds to aromatic amino acids. Besides amino acids, the binding affinity is also reduced by vitamins, including B1, B3, B6, VC, B7, B9, B12, VA and VK3. Transcriptional regulator that probably plays an important role in M.tuberculosis persistence. Regulates the expression of several genes, including lat, rsmG, whiB2, lsr2 and Rv2011c. Acts by binding directly to the promoter region of the target genes. The protein is HTH-type transcriptional regulator LrpA of Mycobacterium tuberculosis (strain ATCC 25618 / H37Rv).